The following is a 684-amino-acid chain: ATP-dependent zinc metalloprotease FtsH (684 aa).

Residues 1–21 lie on the Cytoplasmic side of the membrane; sequence MENKNDMFNKTPKSGKPKMFR. The helical transmembrane segment at 22 to 42 threads the bilayer; sequence FNLYWMYGLIFIMLVALYMTN. Residues 43 to 138 lie on the Periplasmic side of the membrane; that stretch reads DSSGTKELGW…QVRFEEGDDA (96 aa). Residues 139–159 traverse the membrane as a helical segment; sequence IWNFLVSFGPIILLIGVWMFL. Residues 160–684 lie on the Cytoplasmic side of the membrane; it reads MRRMSGGTGA…TEENKTGKIA (525 aa). Residue 236–243 participates in ATP binding; it reads GPPGTGKT. Residue His-459 coordinates Zn(2+). Glu-460 is an active-site residue. Residues His-463 and Asp-534 each contribute to the Zn(2+) site. Residues 647-662 are compositionally biased toward basic and acidic residues; that stretch reads EKANGKNKENADKEAE. Positions 647 to 684 are disordered; the sequence is EKANGKNKENADKEAEADATTENVTDTPTEENKTGKIA.

This sequence in the central section; belongs to the AAA ATPase family. The protein in the C-terminal section; belongs to the peptidase M41 family. Homohexamer. The cofactor is Zn(2+).

The protein localises to the cell inner membrane. Functionally, acts as a processive, ATP-dependent zinc metallopeptidase for both cytoplasmic and membrane proteins. Plays a role in the quality control of integral membrane proteins. This Parabacteroides distasonis (strain ATCC 8503 / DSM 20701 / CIP 104284 / JCM 5825 / NCTC 11152) protein is ATP-dependent zinc metalloprotease FtsH.